The chain runs to 418 residues: MGNITRKGSRDLVVDSAKSLEDGPSAALHSKLYEAIMREDCTTIEVLLRNHPVNQPITILPNSASNRLLLTQPTESIIPIHLAAKYHKAQSLLCLLRHGADPEVRDTTGLTTLNLMLLHWPVTSTTWAKPGNRTHRILTDIQNSSITCLRILCAHGAQVNTQGEISNKRSPLHLAIAYGCYPVLSILTQNGADVNAINEASMTPLHMAANMLNKEMMETLIAYGANVNCAVSSTGNTPLKLAVCTASSKAGRLLGAGVSCIRLLLTHGAKVNAQDYKGQTAIHEACFGGREAIINLLLEFEANVNILTRNGESPIYMYLQRSCNVRDTALLARLLYHTYPLRMTNNQGILPAGIMLPEFRLLRDTLIKQSQKPLSLQGICKRNIRNIYGEKYKQHLKQFLPVTIWNSVYCCYDLAYTS.

ANK repeat units follow at residues 27-57 (ALHSKLYEAIMREDCTTIEVLLRNHPVNQPI), 75-104 (ESIIPIHLAAKYHKAQSLLCLLRHGADPEV), 132-161 (NRTHRILTDIQNSSITCLRILCAHGAQVNT), 167-196 (NKRSPLHLAIAYGCYPVLSILTQNGADVNA), 200-229 (ASMTPLHMAANMLNKEMMETLIAYGANVNC), 234-273 (TGNTPLKLAVCTASSKAGRLLGAGVSCIRLLLTHGAKVNA), 277-306 (KGQTAIHEACFGGREAIINLLLEFEANVNI), and 310-343 (NGESPIYMYLQRSCNVRDTALLARLLYHTYPLRM).

This chain is Ankyrin repeat domain-containing protein 61 (ANKRD61), found in Homo sapiens (Human).